The sequence spans 43 residues: METATLVAISISGLLVSFTGYALYTAFGQPSQKLRDPFEEHGD.

A helical membrane pass occupies residues 5–27 (TLVAISISGLLVSFTGYALYTAF).

It belongs to the PsbN family.

It localises to the plastid. The protein resides in the chloroplast thylakoid membrane. May play a role in photosystem I and II biogenesis. The chain is Protein PsbN from Coelogyne cristata (Orchid).